Here is a 156-residue protein sequence, read N- to C-terminus: Ribonuclease pancreatic (156 aa).

Residues 1–26 (MGLEKSLVFFPLLVLLALGWVQPCLG) form the signal peptide. 2 residues coordinate substrate: Lys-33 and Arg-36. The active-site Proton acceptor is the His-38. Cystine bridges form between Cys-54–Cys-112, Cys-68–Cys-123, Cys-86–Cys-138, and Cys-93–Cys-100. Position 69–73 (69–73 (KPVNT)) interacts with substrate. Residue Asn-90 is glycosylated (N-linked (GlcNAc...) asparagine). The substrate site is built by Lys-94 and Arg-113. His-147 functions as the Proton donor in the catalytic mechanism.

It belongs to the pancreatic ribonuclease family. In terms of assembly, monomer. Interacts with and forms tight 1:1 complexes with RNH1. Dimerization of two such complexes may occur. Interaction with RNH1 inhibits this protein. As to expression, pancreas.

Its subcellular location is the secreted. It catalyses the reaction an [RNA] containing cytidine + H2O = an [RNA]-3'-cytidine-3'-phosphate + a 5'-hydroxy-ribonucleotide-3'-[RNA].. The catalysed reaction is an [RNA] containing uridine + H2O = an [RNA]-3'-uridine-3'-phosphate + a 5'-hydroxy-ribonucleotide-3'-[RNA].. In terms of biological role, endonuclease that catalyzes the cleavage of RNA on the 3' side of pyrimidine nucleotides. Acts on single-stranded and double-stranded RNA. In Glis glis (Fat dormouse), this protein is Ribonuclease pancreatic (RNASE1).